The sequence spans 254 residues: Type III pantothenate kinase (254 aa).

6 to 13 (DVGNSNIV) is an ATP binding site. Residues Tyr100 and 107–110 (GADR) each bind substrate. Asp109 (proton acceptor) is an active-site residue. Asp129 serves as a coordination point for K(+). Thr132 contributes to the ATP binding site. Residue Thr184 coordinates substrate.

Belongs to the type III pantothenate kinase family. As to quaternary structure, homodimer. It depends on NH4(+) as a cofactor. Requires K(+) as cofactor.

It localises to the cytoplasm. The catalysed reaction is (R)-pantothenate + ATP = (R)-4'-phosphopantothenate + ADP + H(+). It functions in the pathway cofactor biosynthesis; coenzyme A biosynthesis; CoA from (R)-pantothenate: step 1/5. Functionally, catalyzes the phosphorylation of pantothenate (Pan), the first step in CoA biosynthesis. This Citrifermentans bemidjiense (strain ATCC BAA-1014 / DSM 16622 / JCM 12645 / Bem) (Geobacter bemidjiensis) protein is Type III pantothenate kinase.